Consider the following 1190-residue polypeptide: Serine/threonine-protein kinase N (1190 aa).

3 consecutive REM-1 domains span residues 28–102, 142–219, and 242–322; these read NLPE…QILL, ALEG…NREQ, and SSQP…ELPA. Positions 359-515 constitute a C2 domain; the sequence is LGGKPYQSVS…MALQLEPQGL (157 aa). The segment covering 395–404 has biased composition (basic and acidic residues); that stretch reads PGRSRRDKDN. Disordered stretches follow at residues 395-415, 572-715, 757-787, and 811-832; these read PGRS…RSFV, HVHM…PPPP, PATP…QPPQ, and SPSS…RNVA. Low complexity-rich tracts occupy residues 576–588 and 767–787; these read GSAG…TGSS and AAAG…QPPQ. The region spanning 863-1122 is the Protein kinase domain; sequence FRLLSVLGRG…AEDVKKQAFF (260 aa). ATP-binding positions include 869 to 877 and Lys-892; that span reads LGRGHFGKV. The Proton acceptor role is filled by Asp-988. In terms of domain architecture, AGC-kinase C-terminal spans 1123-1190; that stretch reads RSIVWDDLLL…QDFSYTAEWC (68 aa).

Belongs to the protein kinase superfamily. Ser/Thr protein kinase family. Interacts (via N-terminus) with Rho1 (via REM repeats), Rac1 (via REM 1 repeat) and Rac2. In terms of processing, phosphorylated. Autophosphorylated; autophosphorylation is stimulated by GTP-bound Rho/Rac GTPases.

It is found in the cytoplasm. The protein localises to the nucleus. The protein resides in the membrane. Its subcellular location is the cell projection. It localises to the lamellipodium. It is found in the cytoskeleton. The protein localises to the cleavage furrow. The protein resides in the midbody. Its subcellular location is the cell junction. It carries out the reaction L-seryl-[protein] + ATP = O-phospho-L-seryl-[protein] + ADP + H(+). The enzyme catalyses L-threonyl-[protein] + ATP = O-phospho-L-threonyl-[protein] + ADP + H(+). Activated by lipids, particularly cardiolipin and to a lesser extent by other acidic phospholipids and unsaturated fatty acids. Two specific sites, Thr-1022 (activation loop of the kinase domain) and Thr-1164 (turn motif), may be needed to be phosphorylated for its full activation. Kinase activity is activated upon binding to GTP-bound Rho/Rac GTPases. Pkc-related serine/threonine-protein kinase and Rho/Rac effector protein that participates in specific signal transduction responses in the cell. May play a role in the regulation of cell cycle progression, actin cytoskeleton assembly, cell migration, cell adhesion and transcription activation signaling processes. Plays a role in regulating Rho-mediated dorsal closure during embryogenesis. In Drosophila melanogaster (Fruit fly), this protein is Serine/threonine-protein kinase N (Pkn).